The sequence spans 482 residues: Retrovirus-related Pol polyprotein from type-1 retrotransposable element R2 (482 aa).

Residues 1–84 form the Reverse transcriptase domain; it reads AYADDLILFA…DYFKYLGSRY (84 aa). Residues 208 to 482 are nucleic acid-binding endonuclease; the sequence is QIPAVEKFYQ…ATGGRGRGDI (275 aa).

It carries out the reaction DNA(n) + a 2'-deoxyribonucleoside 5'-triphosphate = DNA(n+1) + diphosphate. This Popillia japonica (Japanese beetle) protein is Retrovirus-related Pol polyprotein from type-1 retrotransposable element R2.